The following is a 627-amino-acid chain: Protein fem-1 homolog B (627 aa).

ANK repeat units lie at residues 45–74 (QRSTPLIIAARNGHAKVVRLLLEHYRVQTQ), 87–116 (DGATALWCAAGAGHFEVVKLLVSHGANVNH), 120–149 (TNSTPLRAACFDGRLDIVKYLVENNANISI), and 153–182 (YDNTCLMIAAYKGHTDVVRYLLEQRADPNA). 3 residues coordinate Zn(2+): His185, Cys186, and His218. ANK repeat units lie at residues 186–215 (CGATALHFAAEAGHIDIVKELIKWRAAIVV) and 218–248 (HGMTPLKVAAESCKADVVELLLSHADCDRRS). Residues 344–377 (SHPIIYRGAVYADNMEFEQCIKLWLHALHLRQKG) form a TPR repeat. 2 ANK repeats span residues 483–527 (EGFS…EVNA) and 531–568 (EGNSALHIIVQYNRPISDFLTLHSIIISLVEAGAHTDM).

The protein belongs to the fem-1 family. Component of a CRL2 E3 ubiquitin-protein ligase complex, also named ECS (Elongin BC-CUL2/5-SOCS-box protein) complex, composed of CUL2, Elongin BC (ELOB and ELOC), RBX1 and substrate-specific adapter FEM1B. Homooligomer. Interacts with PPM1F and PHTF1. Interacts with the death domain of FAS/TNFRSF6 and TNFRSF1A. Interacts with CHEK1. Interacts with NKX3-1. Expressed in pancreatic islets, within both beta cells and non-beta cells (at protein level). Highly expressed in adult testis; expressed in all types of spermatogonia. Also expressed in the prostate of neonatal mice.

The protein resides in the cytoplasm. It is found in the nucleus. The protein operates within protein modification; protein ubiquitination. With respect to regulation, activity of the CRL2(FEM1B) complex toward FNIP1 is inhibited by BEX family proteins (BEX1, BEX2, BEX3 and/or BEX4) in absence of reductive stress. Mechanistically, BEX proteins act as pseudosubstrate inhibitors that associate with FEM1B via zinc in absence of reductive stress, thereby preventing association between FEM1B and FNIP1. Functionally, substrate-recognition component of a Cul2-RING (CRL2) E3 ubiquitin-protein ligase complex of the DesCEND (destruction via C-end degrons) pathway, which recognizes a C-degron located at the extreme C terminus of target proteins, leading to their ubiquitination and degradation. The C-degron recognized by the DesCEND pathway is usually a motif of less than ten residues and can be present in full-length proteins, truncated proteins or proteolytically cleaved forms. The CRL2(FEM1B) complex specifically recognizes proteins ending with -Gly-Leu-Asp-Arg, such as CDK5R1, leading to their ubiquitination and degradation. Also acts as a regulator of the reductive stress response by mediating ubiquitination of reduced FNIP1: in response to reductive stress, the CRL2(FEM1B) complex specifically recognizes a conserved Cys degron in FNIP1 when this degron is reduced, leading to FNIP1 degradation and subsequent activation of mitochondria to recalibrate reactive oxygen species (ROS). Mechanistically, recognizes and binds reduced FNIP1 through two interface zinc ions, which act as a molecular glue that recruit reduced FNIP1 to FEM1B. Promotes ubiquitination of GLI1, suppressing GLI1 transcriptional activator activity. Promotes ubiquitination and degradation of ANKRD37. Promotes ubiquitination and degradation of SLBP. Involved in apoptosis by acting as a death receptor-associated protein that mediates apoptosis. Also involved in glucose homeostasis in pancreatic islet. May also act as an adapter/mediator in replication stress-induced signaling that leads to the activation of CHEK1. This is Protein fem-1 homolog B from Mus musculus (Mouse).